We begin with the raw amino-acid sequence, 147 residues long: MAIRLIRTDDDPVLRKKSRVVDKIDSRIHTLLDDMIETMYEADGVGLAAPQVGILKQVIVIDVGEGVIELINPEIIKETGSQCDVEGCLSLPGHSGEVERPAIVKVRGLNRQGKMVEIQGTELLARALCHEIDHLNGILFTDKIIKE.

Fe cation-binding residues include Cys-88 and His-130. The active site involves Glu-131. His-134 contacts Fe cation.

Belongs to the polypeptide deformylase family. Requires Fe(2+) as cofactor.

The enzyme catalyses N-terminal N-formyl-L-methionyl-[peptide] + H2O = N-terminal L-methionyl-[peptide] + formate. In terms of biological role, removes the formyl group from the N-terminal Met of newly synthesized proteins. Requires at least a dipeptide for an efficient rate of reaction. N-terminal L-methionine is a prerequisite for activity but the enzyme has broad specificity at other positions. This is Peptide deformylase from Alkaliphilus metalliredigens (strain QYMF).